Consider the following 581-residue polypeptide: Caprolactamase subunit beta (581 aa).

D41, H99, D102, and H124 together coordinate Zn(2+).

The protein belongs to the HyuB family. The caprolactamase is a heterotetramer composed of two alpha subunits (CapA) and two beta subunits (CapB). It depends on Zn(2+) as a cofactor.

Its activity is regulated as follows. Activity is dependent on the presence of ATP and bicarbonate. The requirement for bicarbonate may be related to allosteric activation through conformational effects, but it is also conceivable that carboxyphosphate is formed and acts as a mediator in caprolactam activation, forming carboxy- or phospholactim. In terms of biological role, component of a caprolactamase involved in the degradation of caprolactam, an industrial compound mainly used in the production of Nylon 6. Catalyzes the ATP-dependent hydrolysis of the caprolactam ring to form 6-aminocaproic acid (6-ACA). The beta subunit is responsible for hydrolytic lactam ring opening. The enzyme cannot use 5-oxoproline. The polypeptide is Caprolactamase subunit beta (Pseudomonas jessenii).